The sequence spans 544 residues: MTPGEIKRLYFIIRVFLSYGLDELIPKVKLTLPLRIGRFGFFWIKNQHKGKELGERLRLALQELGPVWIKFGQMLSTRRDLFPLAIADQLSLLQDKVASFDGKLARRYIEESLGGPLEQWFDDFDEKALASASIAQVHTAKLKENGKEVVLKVIRPDILPVIKADVKLMYRIANWVPLLPDGRRLRPKEVVREYEKTLIDELNLLRESANAIQLRRNFENSSMLYVPEVYADYCRENVMVMERIYGIPVSDIAALKAQGTNMKILAERGVKVFFTQVFRDSFFHADMHPGNIFVSYEHPEDPLYIGIDCGIVGSLNKEDKRYLAENFIAFFNRDYRKVAELHVDSGWVPADTNVEDFEFAIRTVCEPIFEKPLAEISFGHVLLNLFNTARRFNMEVQPQLVLLQKTLLYIEGLGRQLYPQLDLWKTAKPFLEDWVHSQVGIPAITQALKEKAPYWAEKMPEIPDLIYGALRQHKFLQSNIEQLSEQLKQQRNKQRKSQYLLGIGATLILCGSLFFISASNRMAIAFMSAGALSWIIGWYKSGKS.

A Protein kinase domain is found at 123–500 (DFDEKALASA…RNKQRKSQYL (378 aa)). Residues 129–137 (LASASIAQV) and lysine 152 contribute to the ATP site. Aspartate 286 serves as the catalytic Proton acceptor. The next 2 membrane-spanning stretches (helical) occupy residues 499 to 519 (YLLGIGATLILCGSLFFISAS) and 522 to 542 (MAIAFMSAGALSWIIGWYKSG).

Belongs to the ABC1 family. UbiB subfamily.

It is found in the cell inner membrane. The protein operates within cofactor biosynthesis; ubiquinone biosynthesis [regulation]. In terms of biological role, is probably a protein kinase regulator of UbiI activity which is involved in aerobic coenzyme Q (ubiquinone) biosynthesis. Required for the expression of 2'-N-acetyltransferase. In Providencia stuartii, this protein is Probable protein kinase UbiB.